Consider the following 934-residue polypeptide: 2-oxoglutarate dehydrogenase E1 component (934 aa).

Basic and acidic residues predominate over residues 515–537; sequence RAAQDKIDKSDKMDNPDMERPES. Positions 515 to 544 are disordered; the sequence is RAAQDKIDKSDKMDNPDMERPESLQEPLQS.

The protein belongs to the alpha-ketoglutarate dehydrogenase family. Homodimer. Part of the 2-oxoglutarate dehydrogenase (OGDH) complex composed of E1 (2-oxoglutarate dehydrogenase), E2 (dihydrolipoamide succinyltransferase) and E3 (dihydrolipoamide dehydrogenase); the complex contains multiple copies of the three enzymatic components (E1, E2 and E3). Thiamine diphosphate serves as cofactor.

It catalyses the reaction N(6)-[(R)-lipoyl]-L-lysyl-[protein] + 2-oxoglutarate + H(+) = N(6)-[(R)-S(8)-succinyldihydrolipoyl]-L-lysyl-[protein] + CO2. Functionally, E1 component of the 2-oxoglutarate dehydrogenase (OGDH) complex which catalyzes the decarboxylation of 2-oxoglutarate, the first step in the conversion of 2-oxoglutarate to succinyl-CoA and CO(2). In Staphylococcus haemolyticus (strain JCSC1435), this protein is 2-oxoglutarate dehydrogenase E1 component.